Consider the following 108-residue polypeptide: MLGPSCFPMISCMNTEEISLLSNNLFTMIFPLRKCGFSSDVECQFNIFFQTLSSVTSKSIIYTLIKVNRSSRSWIAKSEFITTLILQQFKFTTFLFKVHRKKVPGCTI.

This is an uncharacterized protein from Saccharomyces cerevisiae (strain ATCC 204508 / S288c) (Baker's yeast).